A 271-amino-acid chain; its full sequence is Elongation factor Ts (271 aa).

Residues threonine 76–valine 79 are involved in Mg(2+) ion dislocation from EF-Tu.

It belongs to the EF-Ts family.

It localises to the cytoplasm. Associates with the EF-Tu.GDP complex and induces the exchange of GDP to GTP. It remains bound to the aminoacyl-tRNA.EF-Tu.GTP complex up to the GTP hydrolysis stage on the ribosome. The sequence is that of Elongation factor Ts from Saccharopolyspora erythraea (strain ATCC 11635 / DSM 40517 / JCM 4748 / NBRC 13426 / NCIMB 8594 / NRRL 2338).